We begin with the raw amino-acid sequence, 128 residues long: Serum amyloid A-4 protein (128 aa).

Positions 1 to 18 are cleaved as a signal peptide; that stretch reads MKLFIGLIFCSLVMGVSS. The disordered stretch occupies residues 93-128; sequence SSEREEDQVSNRRAEEWGRSGQDPDHFRPAGLPKKY. Over residues 99–120 the composition is skewed to basic and acidic residues; the sequence is DQVSNRRAEEWGRSGQDPDHFR.

This sequence belongs to the SAA family. As to quaternary structure, apolipoprotein of the HDL complex.

It is found in the secreted. Major acute phase reactant. This Sus scrofa (Pig) protein is Serum amyloid A-4 protein.